The primary structure comprises 251 residues: Probable transcriptional regulatory protein Amuc_0709 (251 aa).

Belongs to the TACO1 family.

It is found in the cytoplasm. The polypeptide is Probable transcriptional regulatory protein Amuc_0709 (Akkermansia muciniphila (strain ATCC BAA-835 / DSM 22959 / JCM 33894 / BCRC 81048 / CCUG 64013 / CIP 107961 / Muc)).